Consider the following 610-residue polypeptide: Diol dehydratase-reactivating factor large subunit (610 aa).

11-13 (NSS) is a binding site for ATP. The Mg(2+) site is built by T105, D166, and D183. ATP contacts are provided by residues 459 to 462 (EEIK), 557 to 558 (GS), and R591.

The protein belongs to the DdrA/PduG family. Component of the DDR complex, a heterotetramer of DdrA(2)/DdrB(2). The DDR complex interacts with the diol dehydratase complex in the presence of ADP but not ATP. Requires Mg(2+) as cofactor.

The catalysed reaction is ATP + H2O = ADP + phosphate + H(+). Its function is as follows. Large subunit of the diol dehydratase-reactivating factor (DDR), which reactivates suicidally inhibited adenosylcobalamin-dependent diol dehydratase (DD, pddA, pddB, pddC). DDR acts as a chaperone, reactivating inactivated DD holoenzyme in the presence of ATP, Mg(2+) and free adenosylcobalamin (AdoCbl), by mediating the exchange of the tightly bound damaged cofactor AdoCbl for a free intact one. Reactivation takes place in two steps: ADP-dependent cobalamin release, then ATP-dependent dissociation of the DD apoenzyme-DDR complex. DDR has weak ATPase activity which is required for DD reactivation. This subunit contains the adenosine nucleotide binding site. Activates glycerol-inactivated, O2-inactivated holoenzyme and inactivated enzyme-cyanocobalamin complex. Also reactivates glycerol-inactivated hologlycerol dehydratase, a DD isozyme. This Klebsiella michiganensis (strain ATCC 8724 / DSM 4798 / JCM 20051 / NBRC 3318 / NRRL B-199 / KCTC 1686 / BUCSAV 143 / CCM 1901) protein is Diol dehydratase-reactivating factor large subunit.